The sequence spans 570 residues: Probable D-xylulose kinase A (570 aa).

3 residues coordinate substrate: H98, D279, and N280. ATP-binding positions include W363, G470–G471, and N474.

This sequence belongs to the FGGY kinase family.

The protein resides in the cytoplasm. The enzyme catalyses D-xylulose + ATP = D-xylulose 5-phosphate + ADP + H(+). Highly specific D-xylulose kinase which participates in the catabolism of xylose. Xylose is a major component of hemicelluloses such as xylan. Most fungi utilize D-xylose via three enzymatic reactions, xylose reductase (XR), xylitol dehydrogenase (XDH), and xylulokinase, to form xylulose 5-phosphate, which enters pentose phosphate pathway. This Arthroderma otae (strain ATCC MYA-4605 / CBS 113480) (Microsporum canis) protein is Probable D-xylulose kinase A (xkiA).